Consider the following 281-residue polypeptide: Cis-2,3-dihydrobiphenyl-2,3-diol dehydrogenase (281 aa).

Residue 10-34 coordinates NAD(+); sequence ITGGASGLGRALVDRFVAEGARVAV. S142 lines the substrate pocket. Y155 (proton acceptor) is an active-site residue.

It belongs to the short-chain dehydrogenases/reductases (SDR) family. In terms of assembly, homotetramer.

The enzyme catalyses (2R,3S)-3-phenylcyclohexa-3,5-diene-1,2-diol + NAD(+) = biphenyl-2,3-diol + NADH + H(+). Its pathway is xenobiotic degradation; biphenyl degradation; 2-hydroxy-2,4-pentadienoate and benzoate from biphenyl: step 2/4. In Comamonas testosteroni (Pseudomonas testosteroni), this protein is Cis-2,3-dihydrobiphenyl-2,3-diol dehydrogenase (bphB).